A 71-amino-acid polypeptide reads, in one-letter code: UPF0352 protein Swoo_2786 (71 aa).

The protein belongs to the UPF0352 family.

This chain is UPF0352 protein Swoo_2786, found in Shewanella woodyi (strain ATCC 51908 / MS32).